A 256-amino-acid chain; its full sequence is Protein FixA (256 aa).

This sequence belongs to the ETF beta-subunit/FixA family. In terms of assembly, heterodimer of FixA and FixB.

It functions in the pathway amine and polyamine metabolism; carnitine metabolism. In terms of biological role, required for anaerobic carnitine reduction. May bring reductant to CaiA. This chain is Protein FixA, found in Salmonella dublin (strain CT_02021853).